Reading from the N-terminus, the 936-residue chain is Protocadherin gamma-A10 (936 aa).

The signal sequence occupies residues 1–32 (MAAQRNRSKESKDCSGLVLLCLFFGIPWEAGA). Cadherin domains lie at 33 to 137 (RQIS…APKF), 138 to 246 (QAEN…APVF), 247 to 351 (TLPE…SPEL), 352 to 456 (TITS…PPTF), 457 to 566 (SQVS…APEI), and 574 to 687 (DGST…SPAN). Residues 33–696 (RQISYSIPEE…NSETSDLTLY (664 aa)) lie on the Extracellular side of the membrane. Asn-51 carries an N-linked (GlcNAc...) asparagine glycan. 2 N-linked (GlcNAc...) asparagine glycosylation sites follow: Asn-423 and Asn-549. Residues 697-717 (LVVAVAAVSCVFLAFVIVLLA) traverse the membrane as a helical segment. Residues 718-936 (HRLRRWHKSR…KKKSGKKEKK (219 aa)) are Cytoplasmic-facing. Disordered regions lie at residues 806 to 845 (EDTPLVPQAPPNTDWRFSQAQRPGTSGSQNGDDTGTWPNN) and 906 to 936 (ATLTNAAGKRDGKAPAGGNGNKKKSGKKEKK). Residues 820–845 (WRFSQAQRPGTSGSQNGDDTGTWPNN) are compositionally biased toward polar residues. Positions 926–936 (NKKKSGKKEKK) are enriched in basic residues.

The protein resides in the cell membrane. In terms of biological role, potential calcium-dependent cell-adhesion protein. May be involved in the establishment and maintenance of specific neuronal connections in the brain. The sequence is that of Protocadherin gamma-A10 (PCDHGA10) from Homo sapiens (Human).